The chain runs to 396 residues: Elongation factor Tu (396 aa).

The 197-residue stretch at 10 to 206 folds into the tr-type G domain; that stretch reads KPHVNIGTIG…AVDSYIPEPV (197 aa). The tract at residues 19–26 is G1; sequence GHVDHGKT. 19 to 26 contributes to the GTP binding site; sequence GHVDHGKT. Threonine 26 serves as a coordination point for Mg(2+). The tract at residues 60–64 is G2; it reads GITIA. The tract at residues 81 to 84 is G3; it reads DCPG. Residues 81–85 and 136–139 contribute to the GTP site; these read DCPGH and NKAD. The tract at residues 136–139 is G4; that stretch reads NKAD. The G5 stretch occupies residues 174–176; sequence SAL.

This sequence belongs to the TRAFAC class translation factor GTPase superfamily. Classic translation factor GTPase family. EF-Tu/EF-1A subfamily. In terms of assembly, monomer.

It localises to the cytoplasm. It carries out the reaction GTP + H2O = GDP + phosphate + H(+). Its function is as follows. GTP hydrolase that promotes the GTP-dependent binding of aminoacyl-tRNA to the A-site of ribosomes during protein biosynthesis. The polypeptide is Elongation factor Tu (Geotalea uraniireducens (strain Rf4) (Geobacter uraniireducens)).